The primary structure comprises 522 residues: Neutral amino acid uniporter 4 (522 aa).

A run of 10 helical transmembrane segments spans residues 115–135 (AGVLLGPISLLFFGIISIHCM), 181–201 (LVDWFLVVTQLGFCSVYFVFL), 226–246 (SLDLRIYMFSFLPLIIPLVFI), 255–275 (LSFFANVSMAISLLIVYQYVI), 293–313 (YPLFFGTAIFAFEGIGVVLPL), 329–349 (IGMAIVTTLYISLATLGYFCF), 377–397 (FGIYVTYAIQYYVPAEIILPA), 409–429 (LCEFTMRFFLVCLTCAVAVLI), 435–455 (VISFVGAVSSSTLALILPPLV), and 467–487 (PWVIMKDVGIAVIGFVGFIAG). Residue N515 is glycosylated (N-linked (GlcNAc...) asparagine).

It belongs to the amino acid/polyamine transporter 2 family.

The protein resides in the lysosome membrane. It carries out the reaction L-tryptophan(in) = L-tryptophan(out). The catalysed reaction is L-alanine(in) = L-alanine(out). The enzyme catalyses L-proline(in) = L-proline(out). Functionally, uniporter that mediates the transport of neutral amino acids like L-tryptophan, proline and alanine. The transport activity is sodium ions-independent, electroneutral and therefore functions via facilitated diffusion. This is Neutral amino acid uniporter 4 from Xenopus laevis (African clawed frog).